The sequence spans 427 residues: MTEAMNITLSTQPADARWGDKATYSINNDGITLHLNGNDDLGLIQRAARKIDGLGIKQVALTGEGWDIERCWAFWAGYKGPKGVRTVMWPDLDDAQRQELDNRLTIIDWVRDTINAPAEELGPEQLAQRAVDLLCSVACDHVTYRITKGEDLREQNYMGLHTVGRGSERSPVLLALDYNPTGDKDAPVYACLVGKGITFDSGGYSIKQSAFMDSMKSDMGGAATVTGALAFAITRGLNKRVKLFLCCADNLISGNAFKLGDIIRYRNGKNVEVMNTDAEGRLVLADGLIDASAQHPQLIIDMATLTGAAKTALGNDYHALFSFDDTLAGRLLSSAAQENEPFWRLPLAEFHRNQLPSNFAELNNTGSAAYPAGASTAAGFLSHFVENYREGWLHIDCSATYRKAPVEQWAAGATGLGVRTIANLLTA.

The Mn(2+) site is built by lysine 195 and aspartate 200. Residue lysine 207 is part of the active site. The Mn(2+) site is built by aspartate 218, aspartate 277, and glutamate 279. Arginine 281 is an active-site residue.

It belongs to the peptidase M17 family. In terms of assembly, homohexamer. Requires Mn(2+) as cofactor.

It localises to the cytoplasm. The enzyme catalyses Release of an N-terminal amino acid, Xaa, from a peptide or arylamide. Xaa is preferably Glu or Asp but may be other amino acids, including Leu, Met, His, Cys and Gln.. Its function is as follows. Probably plays an important role in intracellular peptide degradation. The polypeptide is Peptidase B (Salmonella arizonae (strain ATCC BAA-731 / CDC346-86 / RSK2980)).